The following is a 287-amino-acid chain: 4-hydroxybenzoate octaprenyltransferase (287 aa).

Helical transmembrane passes span 23–40, 98–118, 141–161, 163–183, 213–233, and 235–255; these read IGSLLLLWPTLWALWLAG, ILFVVLVLLAFGLVLTLNKMT, LPQFVLGAAFGWSIPMAYAAV, ESLPATCWMMFLAYICWTVAY, IIIGLLQFSMLALLLALGNIT, and LGIPYTISLLVAAGMFIYQQI.

This sequence belongs to the UbiA prenyltransferase family. Mg(2+) serves as cofactor.

It is found in the cell inner membrane. It catalyses the reaction all-trans-octaprenyl diphosphate + 4-hydroxybenzoate = 4-hydroxy-3-(all-trans-octaprenyl)benzoate + diphosphate. It functions in the pathway cofactor biosynthesis; ubiquinone biosynthesis. Catalyzes the prenylation of para-hydroxybenzoate (PHB) with an all-trans polyprenyl group. Mediates the second step in the final reaction sequence of ubiquinone-8 (UQ-8) biosynthesis, which is the condensation of the polyisoprenoid side chain with PHB, generating the first membrane-bound Q intermediate 3-octaprenyl-4-hydroxybenzoate. The polypeptide is 4-hydroxybenzoate octaprenyltransferase (Pectobacterium atrosepticum (strain SCRI 1043 / ATCC BAA-672) (Erwinia carotovora subsp. atroseptica)).